We begin with the raw amino-acid sequence, 150 residues long: Macrodomain Ter protein (150 aa).

Belongs to the MatP family. Homodimer.

The protein resides in the cytoplasm. In terms of biological role, required for spatial organization of the terminus region of the chromosome (Ter macrodomain) during the cell cycle. Prevents early segregation of duplicated Ter macrodomains during cell division. Binds specifically to matS, which is a 13 bp signature motif repeated within the Ter macrodomain. This is Macrodomain Ter protein from Escherichia coli O81 (strain ED1a).